Here is a 296-residue protein sequence, read N- to C-terminus: Ribonuclease HIII (296 aa).

The RNase H type-2 domain maps to 81–296; that stretch reads QAMIGTDEVG…TQKAKQLLER (216 aa). Asp87, Glu88, and Asp190 together coordinate a divalent metal cation.

Belongs to the RNase HII family. RnhC subfamily. The cofactor is Mn(2+). Requires Mg(2+) as cofactor.

It is found in the cytoplasm. It catalyses the reaction Endonucleolytic cleavage to 5'-phosphomonoester.. Endonuclease that specifically degrades the RNA of RNA-DNA hybrids. This is Ribonuclease HIII from Streptococcus gordonii (strain Challis / ATCC 35105 / BCRC 15272 / CH1 / DL1 / V288).